The sequence spans 170 residues: RNA polymerase sigma factor TcsR (170 aa).

Residues 122–169 (IKDLTQNEKNILRKIYLHGLRESEISRELNISRQAVNKTHLRALEKLK) form a sigma-70 factor domain-4 region. The H-T-H motif DNA-binding region spans 143–162 (ESEISRELNISRQAVNKTHL).

Belongs to the sigma-70 factor family.

In terms of biological role, sigma factors are initiation factors that promote the attachment of RNA polymerase to specific initiation sites and are then released. Transcriptional regulator specifically required to activate expression of the toxin gene locus, composed of tcsL and tcdE/utxA. This chain is RNA polymerase sigma factor TcsR, found in Paraclostridium sordellii (strain ATCC 9714 / DSM 2141 / JCM 3814 / LMG 15708 / NCIMB 10717 / 211) (Clostridium sordellii).